A 486-amino-acid polypeptide reads, in one-letter code: Ribosomal RNA small subunit methyltransferase F (486 aa).

S-adenosyl-L-methionine is bound by residues 124-130 (ASAPGSK), Glu-148, Asp-175, and Asp-193. The active-site Nucleophile is the Cys-246.

Belongs to the class I-like SAM-binding methyltransferase superfamily. RsmB/NOP family.

The protein resides in the cytoplasm. It catalyses the reaction cytidine(1407) in 16S rRNA + S-adenosyl-L-methionine = 5-methylcytidine(1407) in 16S rRNA + S-adenosyl-L-homocysteine + H(+). In terms of biological role, specifically methylates the cytosine at position 1407 (m5C1407) of 16S rRNA. This chain is Ribosomal RNA small subunit methyltransferase F, found in Shewanella baltica (strain OS195).